Here is a 495-residue protein sequence, read N- to C-terminus: UDP-N-acetylmuramoyl-L-alanyl-D-glutamate--2,6-diaminopimelate ligase (495 aa).

UDP-N-acetyl-alpha-D-muramoyl-L-alanyl-D-glutamate is bound by residues Leu27, Ser29, and 44–46 (HQA). 116–122 (GTNGKTT) serves as a coordination point for ATP. UDP-N-acetyl-alpha-D-muramoyl-L-alanyl-D-glutamate is bound by residues Asn157, 158-159 (TT), Ser185, Gln191, and Arg193. The residue at position 225 (Lys225) is an N6-carboxylysine. Meso-2,6-diaminopimelate is bound by residues Arg390, 414-417 (DNPR), Gly465, and Glu469. The Meso-diaminopimelate recognition motif signature appears at 414-417 (DNPR).

The protein belongs to the MurCDEF family. MurE subfamily. Mg(2+) is required as a cofactor. Carboxylation is probably crucial for Mg(2+) binding and, consequently, for the gamma-phosphate positioning of ATP.

The protein resides in the cytoplasm. The enzyme catalyses UDP-N-acetyl-alpha-D-muramoyl-L-alanyl-D-glutamate + meso-2,6-diaminopimelate + ATP = UDP-N-acetyl-alpha-D-muramoyl-L-alanyl-gamma-D-glutamyl-meso-2,6-diaminopimelate + ADP + phosphate + H(+). Its pathway is cell wall biogenesis; peptidoglycan biosynthesis. In terms of biological role, catalyzes the addition of meso-diaminopimelic acid to the nucleotide precursor UDP-N-acetylmuramoyl-L-alanyl-D-glutamate (UMAG) in the biosynthesis of bacterial cell-wall peptidoglycan. The chain is UDP-N-acetylmuramoyl-L-alanyl-D-glutamate--2,6-diaminopimelate ligase from Salmonella paratyphi A (strain ATCC 9150 / SARB42).